A 511-amino-acid chain; its full sequence is Chromosomal replication initiator protein DnaA (511 aa).

A domain I, interacts with DnaA modulators region spans residues 1–90; that stretch reads MSVELWQQCV…RRSSAPRAAP (90 aa). The interval 91-174 is domain II; that stretch reads NAPVSAAMAA…QVEGALKHTS (84 aa). The tract at residues 125 to 161 is disordered; that stretch reads TAEPAQASDMAEASSRDSYDSMADSAPAPVAPGRTEQ. A domain III, AAA+ region region spans residues 175-391; sequence YLNRTFTFET…GALKRVIAHS (217 aa). Gly-219, Gly-221, Lys-222, and Thr-223 together coordinate ATP. A domain IV, binds dsDNA region spans residues 392–511; it reads HFMGRDITIE…YKNLLRTLTT (120 aa).

The protein belongs to the DnaA family. In terms of assembly, oligomerizes as a right-handed, spiral filament on DNA at oriC.

The protein resides in the cytoplasm. In terms of biological role, plays an essential role in the initiation and regulation of chromosomal replication. ATP-DnaA binds to the origin of replication (oriC) to initiate formation of the DNA replication initiation complex once per cell cycle. Binds the DnaA box (a 9 base pair repeat at the origin) and separates the double-stranded (ds)DNA. Forms a right-handed helical filament on oriC DNA; dsDNA binds to the exterior of the filament while single-stranded (ss)DNA is stabiized in the filament's interior. The ATP-DnaA-oriC complex binds and stabilizes one strand of the AT-rich DNA unwinding element (DUE), permitting loading of DNA polymerase. After initiation quickly degrades to an ADP-DnaA complex that is not apt for DNA replication. Binds acidic phospholipids. This is Chromosomal replication initiator protein DnaA from Pseudomonas putida (strain W619).